Here is a 211-residue protein sequence, read N- to C-terminus: Cytochrome c biogenesis ATP-binding export protein CcmA (211 aa).

In terms of domain architecture, ABC transporter spans 6–211 (LQTVALACER…RDIDLGNWAV (206 aa)). 38-45 (GPNGSGKT) is an ATP binding site.

This sequence belongs to the ABC transporter superfamily. CcmA exporter (TC 3.A.1.107) family. The complex is composed of two ATP-binding proteins (CcmA) and two transmembrane proteins (CcmB).

It is found in the cell inner membrane. The catalysed reaction is heme b(in) + ATP + H2O = heme b(out) + ADP + phosphate + H(+). In terms of biological role, part of the ABC transporter complex CcmAB involved in the biogenesis of c-type cytochromes; once thought to export heme, this seems not to be the case, but its exact role is uncertain. Responsible for energy coupling to the transport system. The chain is Cytochrome c biogenesis ATP-binding export protein CcmA from Pseudomonas fluorescens (strain Pf0-1).